The sequence spans 115 residues: uncharacterized protein (115 aa).

This is an uncharacterized protein from Saccharomyces cerevisiae (strain ATCC 204508 / S288c) (Baker's yeast).